Here is a 376-residue protein sequence, read N- to C-terminus: Inactive 2'-5'-oligoadenylate synthase 1B (376 aa).

At 1-351 (MEQDLRSIPA…VPTEVGVPMK (351 aa)) the chain is on the cytoplasmic side. A helical; Anchor for type IV membrane protein transmembrane segment spans residues 352–370 (YLLCRIFWLLFWSLFHFIF). The Extracellular portion of the chain corresponds to 371 to 376 (GKTSSG).

It belongs to the 2-5A synthase family. In terms of assembly, interacts with OSBPL1A and ABCF3. Highly expressed in lung, spleen and thymus. Also detected at lower levels in heart, kidney, liver, lung, skeletal muscle, testes, uterus and ovaries.

Its subcellular location is the endoplasmic reticulum membrane. In terms of biological role, does not have 2'-5'-OAS activity, but can bind double-stranded RNA. The full-length protein displays antiviral activity against flaviviruses such as west Nile virus (WNV) via an alternative antiviral pathway independent of RNase L. The truncated form of the protein lacks antiviral activity. In Mus musculus (Mouse), this protein is Inactive 2'-5'-oligoadenylate synthase 1B (Oas1b).